Here is a 377-residue protein sequence, read N- to C-terminus: Probable trehalose-phosphate phosphatase G (377 aa).

The interval 1 to 20 (MDLNINKTTPVLSDPTTPVS) is disordered.

This sequence belongs to the trehalose phosphatase family. Requires a divalent metal cation as cofactor.

It carries out the reaction alpha,alpha-trehalose 6-phosphate + H2O = alpha,alpha-trehalose + phosphate. It functions in the pathway glycan biosynthesis; trehalose biosynthesis. Functionally, removes the phosphate from trehalose 6-phosphate to produce free trehalose. Trehalose accumulation in plant may improve abiotic stress tolerance. This chain is Probable trehalose-phosphate phosphatase G (TPPG), found in Arabidopsis thaliana (Mouse-ear cress).